Consider the following 241-residue polypeptide: Biosynthetic peptidoglycan transglycosylase (241 aa).

The helical transmembrane segment at 18 to 38 (GVIGIIALWMAGILIFAFLPV) threads the bilayer.

The protein belongs to the glycosyltransferase 51 family.

The protein localises to the cell inner membrane. It carries out the reaction [GlcNAc-(1-&gt;4)-Mur2Ac(oyl-L-Ala-gamma-D-Glu-L-Lys-D-Ala-D-Ala)](n)-di-trans,octa-cis-undecaprenyl diphosphate + beta-D-GlcNAc-(1-&gt;4)-Mur2Ac(oyl-L-Ala-gamma-D-Glu-L-Lys-D-Ala-D-Ala)-di-trans,octa-cis-undecaprenyl diphosphate = [GlcNAc-(1-&gt;4)-Mur2Ac(oyl-L-Ala-gamma-D-Glu-L-Lys-D-Ala-D-Ala)](n+1)-di-trans,octa-cis-undecaprenyl diphosphate + di-trans,octa-cis-undecaprenyl diphosphate + H(+). Its pathway is cell wall biogenesis; peptidoglycan biosynthesis. Functionally, peptidoglycan polymerase that catalyzes glycan chain elongation from lipid-linked precursors. This is Biosynthetic peptidoglycan transglycosylase from Yersinia pseudotuberculosis serotype O:1b (strain IP 31758).